A 142-amino-acid chain; its full sequence is Transcriptional regulator MraZ (142 aa).

SpoVT-AbrB domains follow at residues 5–51 (ASAL…PRPE) and 77–120 (AMDV…DSQT).

It belongs to the MraZ family. As to quaternary structure, forms oligomers.

The protein localises to the cytoplasm. It is found in the nucleoid. In Burkholderia multivorans (strain ATCC 17616 / 249), this protein is Transcriptional regulator MraZ.